The sequence spans 233 residues: Hydroxyacylglutathione hydrolase (233 aa).

Positions 52, 54, 56, 57, 108, 125, and 163 each coordinate Zn(2+).

This sequence belongs to the metallo-beta-lactamase superfamily. Glyoxalase II family. In terms of assembly, monomer. Requires Zn(2+) as cofactor.

It carries out the reaction an S-(2-hydroxyacyl)glutathione + H2O = a 2-hydroxy carboxylate + glutathione + H(+). Its pathway is secondary metabolite metabolism; methylglyoxal degradation; (R)-lactate from methylglyoxal: step 2/2. Its function is as follows. Thiolesterase that catalyzes the hydrolysis of S-D-lactoyl-glutathione to form glutathione and D-lactic acid. The sequence is that of Hydroxyacylglutathione hydrolase from Histophilus somni (strain 2336) (Haemophilus somnus).